Here is a 344-residue protein sequence, read N- to C-terminus: Protein RecA (344 aa).

65–72 is a binding site for ATP; that stretch reads GPESSGKT.

The protein belongs to the RecA family.

The protein localises to the cytoplasm. Can catalyze the hydrolysis of ATP in the presence of single-stranded DNA, the ATP-dependent uptake of single-stranded DNA by duplex DNA, and the ATP-dependent hybridization of homologous single-stranded DNAs. It interacts with LexA causing its activation and leading to its autocatalytic cleavage. The protein is Protein RecA of Xanthomonas oryzae pv. oryzae (strain PXO99A).